The sequence spans 185 residues: Ribosome-recycling factor (185 aa).

The protein belongs to the RRF family.

Its subcellular location is the cytoplasm. Its function is as follows. Responsible for the release of ribosomes from messenger RNA at the termination of protein biosynthesis. May increase the efficiency of translation by recycling ribosomes from one round of translation to another. This chain is Ribosome-recycling factor, found in Streptococcus pneumoniae (strain 70585).